A 273-amino-acid chain; its full sequence is 4-hydroxy-tetrahydrodipicolinate reductase (273 aa).

Residues 12 to 17 and E38 each bind NAD(+); that span reads GAGGRM. R39 provides a ligand contact to NADP(+). NAD(+) contacts are provided by residues 102–104 and 126–129; these read GTT and AANF. H159 (proton donor/acceptor) is an active-site residue. (S)-2,3,4,5-tetrahydrodipicolinate is bound at residue H160. K163 functions as the Proton donor in the catalytic mechanism. 169-170 is a (S)-2,3,4,5-tetrahydrodipicolinate binding site; the sequence is GT.

This sequence belongs to the DapB family. Homotetramer.

It is found in the cytoplasm. It catalyses the reaction (S)-2,3,4,5-tetrahydrodipicolinate + NAD(+) + H2O = (2S,4S)-4-hydroxy-2,3,4,5-tetrahydrodipicolinate + NADH + H(+). The catalysed reaction is (S)-2,3,4,5-tetrahydrodipicolinate + NADP(+) + H2O = (2S,4S)-4-hydroxy-2,3,4,5-tetrahydrodipicolinate + NADPH + H(+). It functions in the pathway amino-acid biosynthesis; L-lysine biosynthesis via DAP pathway; (S)-tetrahydrodipicolinate from L-aspartate: step 4/4. Its function is as follows. Catalyzes the conversion of 4-hydroxy-tetrahydrodipicolinate (HTPA) to tetrahydrodipicolinate. The sequence is that of 4-hydroxy-tetrahydrodipicolinate reductase from Salmonella choleraesuis (strain SC-B67).